Reading from the N-terminus, the 145-residue chain is Large ribosomal subunit protein uL15 (145 aa).

2 stretches are compositionally biased toward basic residues: residues 1-13 (MVRERTKKLRGGH) and 19-29 (KAGRGKGKKGG). The interval 1 to 33 (MVRERTKKLRGGHYGRGMKAGRGKGKKGGRGNA) is disordered.

The protein belongs to the universal ribosomal protein uL15 family. Part of the 50S ribosomal subunit.

Its function is as follows. Binds to the 23S rRNA. The protein is Large ribosomal subunit protein uL15 of Thermoplasma volcanium (strain ATCC 51530 / DSM 4299 / JCM 9571 / NBRC 15438 / GSS1).